Here is an 864-residue protein sequence, read N- to C-terminus: MRIDKITLTNFLSHEHSEIQFMGEINVIVGQNGAGKSSIIDGIVFSLFRTHSRGNNDNLIRKGSNRGSVTLYLSNEKDKIEIIRDIRSTTEDRLIRNQFPIARSATVVSNEIEKILGIDKDIALSTIIVRQGELDKILENFQEIMGKILKLELIEKLIDSRGPIVEFRKNLENKLRELDRIEQDYNNFKKTVEEKRARVLELKKDKEKLEDEIKNLEKRIKDIKDQFDEYEKKRNQYLKLTTTLKIKEGELNELNRSIEELRKQTENMDQLEKEINELENLRNIKLKFEKYEVLAKSHTEMSANVINLEKEIEEYEKAIRRKEELEPKYLKYKELERKLEELQPKYQQYLKLKSDLDSKLNLKERLEKDASELSNDIDKVNSLEQKVEETRKKQLNLRAQLAKVESLISEKNEIINNISQVEGETCPVCGRPLDEEHKQKIIKEAKSYILQLELNKNELEEELKKITNELNKIEREYRRLSNNKASYDNVMRQLKKLNEEIENLHSEIESLKNIDEEIKKINEEVKELKLYYEEFMRLSKYTKEELDKKRVKLDEMKKKKEEIEKEMRGLESELKGLDRKALESKILDLENKRVKLDEMKKKKGILEDYIRQVKLLQEEVKNLREEVNIIQFDENRYNELKTSLDAYNLSLKEKENRKSRIEGELESLEKDIEEISNRIANYELQLKDREKIINAINKLEKIRSALGERKLQSYIIMTTKQLIENNLNDIISKFDLSIKNVEMEIMPKTGRGRSSSGDILVYTNSGDTLPIVSLSGGERIALSIALRLAIAKALMSNTNFFILDEPTIHLDDQRKAYLIEIIRAAKESVPQIIVVTHDEEVVQAADYVIRVEKRGNKSFVREET.

ATP-binding positions include Asn32–Ser38 and Gln131. 2 coiled-coil regions span residues Arg176–Ile319 and Asp376–Glu413. In terms of domain architecture, Zinc-hook spans Val380–Arg478. Zn(2+) contacts are provided by Cys426 and Cys429. Positions Lys440–Asn697 form a coiled coil.

Belongs to the SMC family. RAD50 subfamily. Homodimer. Forms a heterotetramer composed of two Mre11 subunits and two Rad50 subunits. Zn(2+) serves as cofactor.

Its function is as follows. Part of the Rad50/Mre11 complex, which is involved in the early steps of DNA double-strand break (DSB) repair. The complex may facilitate opening of the processed DNA ends to aid in the recruitment of HerA and NurA. Rad50 controls the balance between DNA end bridging and DNA resection via ATP-dependent structural rearrangements of the Rad50/Mre11 complex. This chain is DNA double-strand break repair Rad50 ATPase, found in Saccharolobus solfataricus (strain ATCC 35092 / DSM 1617 / JCM 11322 / P2) (Sulfolobus solfataricus).